A 559-amino-acid polypeptide reads, in one-letter code: Formate--tetrahydrofolate ligase (559 aa).

ATP is bound at residue Thr68–Ser75.

This sequence belongs to the formate--tetrahydrofolate ligase family.

It catalyses the reaction (6S)-5,6,7,8-tetrahydrofolate + formate + ATP = (6R)-10-formyltetrahydrofolate + ADP + phosphate. Its pathway is one-carbon metabolism; tetrahydrofolate interconversion. In Clostridium tetani (strain Massachusetts / E88), this protein is Formate--tetrahydrofolate ligase.